Consider the following 205-residue polypeptide: Octanoyltransferase (205 aa).

The BPL/LPL catalytic domain occupies 29-204 (AETPDEIWIV…HLLQQLDQKN (176 aa)). Residues 68 to 75 (RGGQVTYH), 135 to 137 (ALG), and 148 to 150 (GVS) each bind substrate. Cys-166 (acyl-thioester intermediate) is an active-site residue.

This sequence belongs to the LipB family.

Its subcellular location is the cytoplasm. The catalysed reaction is octanoyl-[ACP] + L-lysyl-[protein] = N(6)-octanoyl-L-lysyl-[protein] + holo-[ACP] + H(+). Its pathway is protein modification; protein lipoylation via endogenous pathway; protein N(6)-(lipoyl)lysine from octanoyl-[acyl-carrier-protein]: step 1/2. In terms of biological role, catalyzes the transfer of endogenously produced octanoic acid from octanoyl-acyl-carrier-protein onto the lipoyl domains of lipoate-dependent enzymes. Lipoyl-ACP can also act as a substrate although octanoyl-ACP is likely to be the physiological substrate. The protein is Octanoyltransferase of Dechloromonas aromatica (strain RCB).